The primary structure comprises 95 residues: Small ribosomal subunit protein bS18 (95 aa).

Belongs to the bacterial ribosomal protein bS18 family. As to quaternary structure, part of the 30S ribosomal subunit. Forms a tight heterodimer with protein bS6.

Functionally, binds as a heterodimer with protein bS6 to the central domain of the 16S rRNA, where it helps stabilize the platform of the 30S subunit. In Rickettsia peacockii (strain Rustic), this protein is Small ribosomal subunit protein bS18.